A 168-amino-acid chain; its full sequence is Xanthine-guanine phosphoribosyltransferase (168 aa).

5-phospho-alpha-D-ribose 1-diphosphate contacts are provided by residues 43-44 (RG) and 102-110 (DDLVDTGAT). Mg(2+) is bound at residue D103. Positions 106 and 149 each coordinate guanine. The xanthine site is built by D106 and I149. Residues 106 to 110 (DTGAT) and 148 to 149 (WI) contribute to the GMP site.

The protein belongs to the purine/pyrimidine phosphoribosyltransferase family. XGPT subfamily. Homotetramer. Requires Mg(2+) as cofactor.

Its subcellular location is the cell inner membrane. The catalysed reaction is GMP + diphosphate = guanine + 5-phospho-alpha-D-ribose 1-diphosphate. The enzyme catalyses XMP + diphosphate = xanthine + 5-phospho-alpha-D-ribose 1-diphosphate. It catalyses the reaction IMP + diphosphate = hypoxanthine + 5-phospho-alpha-D-ribose 1-diphosphate. It functions in the pathway purine metabolism; GMP biosynthesis via salvage pathway; GMP from guanine: step 1/1. The protein operates within purine metabolism; XMP biosynthesis via salvage pathway; XMP from xanthine: step 1/1. Its function is as follows. Purine salvage pathway enzyme that catalyzes the transfer of the ribosyl-5-phosphate group from 5-phospho-alpha-D-ribose 1-diphosphate (PRPP) to the N9 position of the 6-oxopurines guanine and xanthine to form the corresponding ribonucleotides GMP (guanosine 5'-monophosphate) and XMP (xanthosine 5'-monophosphate), with the release of PPi. To a lesser extent, also acts on hypoxanthine. This Nitrobacter hamburgensis (strain DSM 10229 / NCIMB 13809 / X14) protein is Xanthine-guanine phosphoribosyltransferase.